The primary structure comprises 79 residues: Alpha-actitoxin-Ms11a-4 (79 aa).

Residues 1 to 23 (MKVLVAVLVFALLMCMFVDIAES) form the signal peptide. Positions 24-46 (RRRDNPEYPSGLRYDEEMGVFKR) are excised as a propeptide. 3 disulfides stabilise this stretch: cysteine 47/cysteine 61, cysteine 54/cysteine 67, and cysteine 60/cysteine 76. Tyrosine 78 carries the post-translational modification Tyrosine amide.

The protein resides in the secreted. It localises to the nematocyst. Functionally, alpha-toxins act on postsynaptic membranes, they bind to the nicotinic acetylcholine receptors (nAChR) and thus inhibit them. This toxin very weakly competes with alpha-bungarotoxin for binding to orthosteric sites on muscle-type T.carlifornicus (IC(50)=14.95 uM) and human alpha-7/CHRNA7 nAChRs (IC(50)&gt;45 uM). The protein is Alpha-actitoxin-Ms11a-4 of Metridium senile (Brown sea anemone).